The following is a 194-amino-acid chain: Adenylate kinase (194 aa).

8 to 16 (GIPGVGKST) contributes to the ATP binding site.

The protein belongs to the archaeal adenylate kinase family. In terms of assembly, homotrimer.

The protein resides in the cytoplasm. It catalyses the reaction AMP + ATP = 2 ADP. The polypeptide is Adenylate kinase (adkA) (Sulfolobus acidocaldarius (strain ATCC 33909 / DSM 639 / JCM 8929 / NBRC 15157 / NCIMB 11770)).